A 346-amino-acid chain; its full sequence is MEREKEQFRKLFIGGLSFETTEESLRNYYEQWGTLTDCVVMRDPASKRSRGFGFVTFSCMNEVDAAMATRPHTIDGRVVEPKRAVAREESAKPGAHVTVKKLFVGGIKEDTEEHHLREYFEEYGKIDSIEIITDKQSGKKRGFAFVTFDDHDPVDKIVLQKYHTINGHNAEVRKALSKQEMQDVQNTRNNRGGNFGFGDSRGGGNFGSGPGGNFRGGSDGYGGGRGYGDNGYNGYGGGQGGGNYGGGPSYGGGRGGGYGGGAGYGNQGGGYGGGYDNYGGGNYGGGGNYNDFGNYNQQSSNYGPMKSGGNFGGNRSMGGGPYGGGNYGPGNASGGNGGGYGGRNRY.

2 RRM domains span residues 9-92 (RKLF…ESAK) and 100-179 (KKLF…LSKQ). Disordered regions lie at residues 182-217 (QDVQ…FRGG) and 326-346 (NYGP…RNRY). A compositionally biased stretch (gly residues) spans 193–217 (GNFGFGDSRGGGNFGSGPGGNFRGG). The interval 297–340 (QQSSNYGPMKSGGNFGGNRSMGGGPYGGGNYGPGNASGGNGGGY) is nuclear targeting sequence.

Its subcellular location is the nucleus. Functionally, forms complexes (ribonucleosomes) with at least 20 other different hnRNP and heterogeneous nuclear RNA in the nucleus. The sequence is that of Heterogeneous nuclear ribonucleoprotein A2 homolog 1 from Xenopus laevis (African clawed frog).